The primary structure comprises 215 residues: Probable transaldolase (215 aa).

Lysine 83 (schiff-base intermediate with substrate) is an active-site residue.

Belongs to the transaldolase family. Type 3B subfamily.

It is found in the cytoplasm. The catalysed reaction is D-sedoheptulose 7-phosphate + D-glyceraldehyde 3-phosphate = D-erythrose 4-phosphate + beta-D-fructose 6-phosphate. It functions in the pathway carbohydrate degradation; pentose phosphate pathway; D-glyceraldehyde 3-phosphate and beta-D-fructose 6-phosphate from D-ribose 5-phosphate and D-xylulose 5-phosphate (non-oxidative stage): step 2/3. Its function is as follows. Transaldolase is important for the balance of metabolites in the pentose-phosphate pathway. This Heliobacterium modesticaldum (strain ATCC 51547 / Ice1) protein is Probable transaldolase.